A 569-amino-acid polypeptide reads, in one-letter code: Peroxynitrite isomerase THAP4 (569 aa).

The segment at 1-85 (MVICCAAVNC…LKPTAVPSIF (85 aa)) adopts a THAP-type zinc-finger fold. Residues 83–219 (SIFHLSEKKR…GISMDDFTPP (137 aa)) are disordered. Polar residues predominate over residues 121–130 (IGSSLSSSDN). Ser159 carries the phosphoserine modification. Residues 196–210 (ASSSAADAGGADKSG) show a composition bias toward low complexity. The HCFC1-binding motif (HBM) motif lies at 230 to 233 (LHSY). Position 234 is a phosphoserine (Ser234). A disordered region spans residues 235–312 (FSSKHTRERP…EAVQSEHSDA (78 aa)). Basic and acidic residues predominate over residues 242-262 (ERPSVPREPMDRKRLKRDIEP). The span at 265–279 (SGNSVAQSPPSSSLT) shows a compositional bias: polar residues. Positions 280–289 (ATPQKASQSP) are enriched in low complexity. Residues 407–569 (PPKLNPVVEP…LHITYKKVTP (163 aa)) form a nitrobindin region. Heme b contacts are provided by Thr436 and His559.

It in the C-terminal section; belongs to the nitrobindin family. Homodimer. Heme b serves as cofactor.

It is found in the cytoplasm. The protein resides in the nucleus. It carries out the reaction peroxynitrite = nitrate. The protein operates within nitrogen metabolism. In terms of biological role, heme-binding protein able to scavenge peroxynitrite and to protect free L-tyrosine against peroxynitrite-mediated nitration, by acting as a peroxynitrite isomerase that converts peroxynitrite to nitrate. Therefore, this protein likely plays a role in peroxynitrite sensing and in the detoxification of reactive nitrogen and oxygen species (RNS and ROS, respectively). Is able to bind nitric oxide (NO) in vitro, but may act as a sensor of peroxynitrite levels in vivo, possibly modulating the transcriptional activity residing in the N-terminal region. This chain is Peroxynitrite isomerase THAP4, found in Rattus norvegicus (Rat).